Consider the following 1097-residue polypeptide: Importin-5 (1097 aa).

The residue at position 2 (Ala-2) is an N-acetylalanine. 24 HEAT repeats span residues 5–38 (AAEQ…NIPG), 43–77 (TFLL…FDEV), 95–122 (MIIQ…NLID), 130–157 (PEGL…IFWN), 167–201 (QHYL…AAFI), 210–246 (LFKH…IADT), 254–289 (HLEA…LSET), 298–350 (TNIV…ACGL), 352–386 (GKLV…SAIG), 390–430 (HQQM…ATDF), 432–472 (PGFQ…FTED), 475–523 (KSLL…ADTA), 525–568 (EKFV…GLAV), 570–615 (KEKF…CKIL), 617–692 (KEFQ…AKEL), 695–737 (GFVE…ARVR), 741–780 (YLTQ…IEVM), 787–853 (NEHF…FSSY), 856–895 (KVLP…IEHC), 903–935 (AEYF…MAQY), 943–983 (FCTE…MKFK), 990–1021 (EEVL…DLIE), 1032–1067 (NTNL…VVRQ), and 1070–1093 (TSGG…IQEL). The 72-residue stretch at 28–99 (QAEETYENIP…KSELLMIIQM (72 aa)) folds into the Importin N-terminal domain. Positions 325–375 (DELEDDDFDSNAVAGESALDRMACGLGGKLVLPMIKEHIMQMLQNPDWKYR) are ran-GTP binding. The residue at position 827 (Ser-827) is a Phosphoserine.

Belongs to the importin beta family. Importin beta-3 subfamily. Interacts with RPS7 and RPL5. Interacts with RPL23A (via BIB domain). Interacts with H2A, H2B, H3 and H4 histones. Interacts with CPEB3; this mediates CPEB3 nuclear import following neuronal stimulation which enhances the interaction in a RAN-regulated manner. Interacts with AIFM2; this interaction likely mediates the translocation of AIFM2 into the nucleus upon oxidative stress. Interacts with STX3 (isoform 3). Interacts with SRP19. As to quaternary structure, (Microbial infection) Interacts with HIV-1 Rev.

It localises to the cytoplasm. It is found in the nucleus. The protein resides in the nucleolus. Its function is as follows. Functions in nuclear protein import as nuclear transport receptor. Serves as receptor for nuclear localization signals (NLS) in cargo substrates. Is thought to mediate docking of the importin/substrate complex to the nuclear pore complex (NPC) through binding to nucleoporin and the complex is subsequently translocated through the pore by an energy requiring, Ran-dependent mechanism. At the nucleoplasmic side of the NPC, Ran binds to the importin, the importin/substrate complex dissociates and importin is re-exported from the nucleus to the cytoplasm where GTP hydrolysis releases Ran. The directionality of nuclear import is thought to be conferred by an asymmetric distribution of the GTP- and GDP-bound forms of Ran between the cytoplasm and nucleus. Mediates the nuclear import of ribosomal proteins RPL23A, RPS7 and RPL5. In vitro, mediates nuclear import of H2A, H2B, H3 and H4 histones. Binds to CPEB3 and mediates its nuclear import following neuronal stimulation. In case of HIV-1 infection, binds and mediates the nuclear import of HIV-1 Rev. This Homo sapiens (Human) protein is Importin-5 (IPO5).